The chain runs to 62 residues: Defensin BmKDfsin4 (62 aa).

The first 24 residues, 1–24 (MKTIVLLFVLALVFCTLEMGIVEA), serve as a signal peptide directing secretion. Disulfide bonds link Cys-28-Cys-49, Cys-35-Cys-57, and Cys-39-Cys-59.

The protein belongs to the invertebrate defensin family. Type 2 subfamily.

It localises to the secreted. Its function is as follows. Dual-function peptide with antimicrobial and potassium channel-blocking activities. Shows inhibitory activity against Gram-positive bacteria such as S.aureus, B.subtilis, and M.luteus as well as methicillin-resistant S.aureus (MIC=0.1-20 uM). Does not act on bacteria by disrupting membranes. Also moderately inhibits Kv1.1/KCNA1 (25.2% inhibition at 1 uM), Kv1.2/KCNA2 (30.5% inhibition at 1 uM), and Kv1.3/KCNA3 potassium channels (IC(50)=510.2 nM, 61% inhibition at 1 uM). Inhibits potassium channels by interacting with the pore region. Does not show hemolytic activity. In vitro, dose-dependently decreases the production of Hepatitis B virus (HBV) DNA and HBV viral proteins in both culture medium and cell lysate. In Olivierus martensii (Manchurian scorpion), this protein is Defensin BmKDfsin4.